Here is a 440-residue protein sequence, read N- to C-terminus: MSEFSQTVPELVAWARKNDFSISLPVDRLSFLLAVATLNGERLDGEMSEGELVDAFRHVSDAFEQTSETIGVRANNAINDMVRQRLLNRFTSEQAEGNAIYRLTPLGIGITDYYIRQREFSTLRLSMQLSIVAGELKRAADAAEEGGDEFHWHRNVYAPLKYSVAEIFDSIDLTQRLMDEQQQQVKDDIAQLLNKDWRAAISSCELLLSETSGTLRELQDTLEAAGDKLQANLLRIQDATMTHDDLHFVDRLVFDLQSKLDRIISWGQQSIDLWIGYDRHVHKFIRTAIDMDKNRVFAQRLRQSVQTYFDEPWALTYANADRLLDMRDEEMALRDEEVTGELPEDLEYEEFNEIREQLAAIIEEQLAVYKTRQVPLDLGLVVREYLAQYPRARHFDVARIVIDQAVRLGVAQADFTGLPAKWQPINDYGAKVQAHVIDKY.

Positions 208–236 (LSETSGTLRELQDTLEAAGDKLQANLLRI) are leucine-zipper.

The protein belongs to the MukF family. As to quaternary structure, interacts, and probably forms a ternary complex, with MukE and MukB via its C-terminal region. The complex formation is stimulated by calcium or magnesium. It is required for an interaction between MukE and MukB.

The protein localises to the cytoplasm. The protein resides in the nucleoid. Functionally, involved in chromosome condensation, segregation and cell cycle progression. May participate in facilitating chromosome segregation by condensation DNA from both sides of a centrally located replisome during cell division. Not required for mini-F plasmid partitioning. Probably acts via its interaction with MukB and MukE. Overexpression results in anucleate cells. It has a calcium binding activity. The protein is Chromosome partition protein MukF of Escherichia fergusonii (strain ATCC 35469 / DSM 13698 / CCUG 18766 / IAM 14443 / JCM 21226 / LMG 7866 / NBRC 102419 / NCTC 12128 / CDC 0568-73).